Reading from the N-terminus, the 227-residue chain is ATP-dependent dethiobiotin synthetase BioD (227 aa).

13–18 (DVGKTV) contacts ATP. T17 contacts Mg(2+). K38 is a catalytic residue. ATP-binding positions include D55, 116 to 119 (EGAG), 176 to 177 (NR), and 205 to 207 (PYI). Positions 55 and 116 each coordinate Mg(2+).

It belongs to the dethiobiotin synthetase family. In terms of assembly, homodimer. It depends on Mg(2+) as a cofactor.

Its subcellular location is the cytoplasm. The catalysed reaction is (7R,8S)-7,8-diammoniononanoate + CO2 + ATP = (4R,5S)-dethiobiotin + ADP + phosphate + 3 H(+). Its pathway is cofactor biosynthesis; biotin biosynthesis; biotin from 7,8-diaminononanoate: step 1/2. Functionally, catalyzes a mechanistically unusual reaction, the ATP-dependent insertion of CO2 between the N7 and N8 nitrogen atoms of 7,8-diaminopelargonic acid (DAPA, also called 7,8-diammoniononanoate) to form a ureido ring. The polypeptide is ATP-dependent dethiobiotin synthetase BioD (Vibrio campbellii (strain ATCC BAA-1116)).